A 334-amino-acid chain; its full sequence is Beta-ketoacyl-[acyl-carrier-protein] synthase III (334 aa).

Residues Cys-114 and His-253 contribute to the active site. The ACP-binding stretch occupies residues 254–258 (QANIR). The active site involves Asn-283.

This sequence belongs to the thiolase-like superfamily. FabH family. Homodimer.

It localises to the cytoplasm. The catalysed reaction is malonyl-[ACP] + acetyl-CoA + H(+) = 3-oxobutanoyl-[ACP] + CO2 + CoA. It functions in the pathway lipid metabolism; fatty acid biosynthesis. In terms of biological role, catalyzes the condensation reaction of fatty acid synthesis by the addition to an acyl acceptor of two carbons from malonyl-ACP. Catalyzes the first condensation reaction which initiates fatty acid synthesis and may therefore play a role in governing the total rate of fatty acid production. Possesses both acetoacetyl-ACP synthase and acetyl transacylase activities. Its substrate specificity determines the biosynthesis of branched-chain and/or straight-chain of fatty acids. This chain is Beta-ketoacyl-[acyl-carrier-protein] synthase III, found in Campylobacter curvus (strain 525.92).